A 444-amino-acid polypeptide reads, in one-letter code: Argininosuccinate synthase (444 aa).

Residues 18–26 and Ala44 each bind ATP; that span reads AFSGGLDTS. Residue Tyr100 coordinates L-citrulline. ATP is bound by residues Gly130 and Thr132. L-aspartate is bound by residues Thr132, Asn136, and Asp137. Position 136 (Asn136) interacts with L-citrulline. Asp137 contributes to the ATP binding site. L-citrulline-binding residues include Arg140 and Ser193. Asp195 lines the ATP pocket. Positions 202, 204, and 281 each coordinate L-citrulline.

It belongs to the argininosuccinate synthase family. Type 2 subfamily. Homotetramer.

The protein resides in the cytoplasm. The enzyme catalyses L-citrulline + L-aspartate + ATP = 2-(N(omega)-L-arginino)succinate + AMP + diphosphate + H(+). It functions in the pathway amino-acid biosynthesis; L-arginine biosynthesis; L-arginine from L-ornithine and carbamoyl phosphate: step 2/3. The chain is Argininosuccinate synthase from Histophilus somni (strain 2336) (Haemophilus somnus).